The sequence spans 75 residues: Translational regulator CsrA (75 aa).

It belongs to the CsrA/RsmA family. As to quaternary structure, homodimer; the beta-strands of each monomer intercalate to form a hydrophobic core, while the alpha-helices form wings that extend away from the core.

The protein resides in the cytoplasm. Its function is as follows. A translational regulator that binds mRNA to regulate translation initiation and/or mRNA stability. Usually binds in the 5'-UTR at or near the Shine-Dalgarno sequence preventing ribosome-binding, thus repressing translation. Its main target seems to be the major flagellin gene, while its function is anatagonized by FliW. The polypeptide is Translational regulator CsrA (Exiguobacterium sibiricum (strain DSM 17290 / CCUG 55495 / CIP 109462 / JCM 13490 / 255-15)).